The following is a 547-amino-acid chain: MEATRNLVSSSPSFQTKTHLKSSYSSPSSVVMLHDQTTTPVVNSRHLNSLSRHFPASVLSQEPREESRPLSHALRDDRTSQLTLERRQFDELVSSREDEKFEQQLLHSTGLWNLLISPLTSETKLPAVVSPLADAELCDVVALAQKALSASKQAALLVDDTEANPSDNIKDSLSTSSSMSLPEKGNIVRSKRQLERRAKNRRAPKSNDVDDEGYVPQKTSAKKKYKQGADNDDALQLFLWGPETKQLLTAKEEAELISHIQHLLKLEKVKTKLESQNGCEPTIGEWAEAMGISSPVLKSDIHRGRSSREKLITANLRLVVHIAKQYQNRGLNFQDLLQEGSMGLMKSVEKFKPQSGCRFATYAYWWIRQSIRKSIFQNSRTIRLPENVYMLLGKVSEARKTCVQEGNYRPSKEELAGHVGVSTEKLDKLLYNTRTPLSMQQPIWSDQDTTFQEITPDSGIETPTMSVGKQLMRNHVRNLLNVLSPKERRIIKLRFGIDGGKQRSLSEIGEIYGLSKERVRQLESRALYRLKQNMNSHGLHAYADLLV.

Residues Met1–Lys17 are compositionally biased toward polar residues. Disordered regions lie at residues Met1–Ser28 and Phe54–Thr79. Residues Met1–Pro55 constitute a chloroplast transit peptide. Over residues Glu62–Thr79 the composition is skewed to basic and acidic residues. Phosphoserine; by CK2 occurs at positions 94, 95, 174, 176, 177, and 180. A disordered region spans residues Ala163–Lys226. The segment covering Ser172–Leu181 has biased composition (low complexity). Position 249 is a phosphothreonine; by CK2 (Thr249). The Polymerase core binding signature appears at Asp335 to Val348. The segment at residues Leu505–Ser524 is a DNA-binding region (H-T-H motif).

This sequence belongs to the sigma-70 factor family. As to quaternary structure, interacts (via N-terminus) with DG1 (via C-terminus). Post-translationally, phosphorylated to acquire sigma activity; site-specific phosphorylation regulates promoter affinity. Phosphorylation at Ser-174 by chloroplastic CK2 requires prior phosphorylation at Ser-177. Phosphorylation at either Ser-94, Ser-95 or Ser-174 is required for sigma activation. In terms of tissue distribution, expressed in seedling, accumulating progressively. Present in leaves but not in roots.

The protein resides in the plastid. Its subcellular location is the chloroplast. Sigma factors are initiation factors that promote the attachment of plastid-encoded RNA polymerase (PEP) to specific initiation sites and are then released. Regulates transcription in chloroplast in a DG1-dependent manner. Involved in light-dependent chloroplast development. Required during early plant development and primary leaf formation. The chain is RNA polymerase sigma factor sigF, chloroplastic (SIGF) from Arabidopsis thaliana (Mouse-ear cress).